The primary structure comprises 426 residues: Zinc finger CCCH domain-containing protein 13 (426 aa).

The C3H1-type zinc finger occupies 10 to 36 (AYKTKLCALWQRGNCNRDTCSFAHGHG). Disordered regions lie at residues 34–155 (GHGD…HEKQ), 253–317 (NEEG…DKTS), and 390–426 (NDAD…VDVE). Basic and acidic residues-rich tracts occupy residues 54 to 70 (RRDY…DRRF), 78 to 101 (PGRE…RDSS), and 108 to 120 (RKSE…KTDD). The segment covering 124-133 (NSSRSLSLSD) has biased composition (low complexity). Positions 135–155 (NDEKKKDKFSSGDEKEDHEKQ) are enriched in basic and acidic residues. Positions 144–245 (SSGDEKEDHE…FERLGDLLAS (102 aa)) form a coiled coil. Polar residues predominate over residues 255–272 (EGSSVNEDLNERSPNTAA). A compositionally biased stretch (basic and acidic residues) spans 284–317 (EEAKAVKKRRERDSDTMTRSDKYRSDVTDFDKTS). Acidic residues predominate over residues 416-426 (YEGDDEEVDVE).

The polypeptide is Zinc finger CCCH domain-containing protein 13 (Oryza sativa subsp. japonica (Rice)).